A 138-amino-acid chain; its full sequence is uncharacterized protein (138 aa).

The helical transmembrane segment at 11 to 33 (ILLGLTLSLTFLYPLIITLIILY) threads the bilayer.

The protein resides in the membrane. This is an uncharacterized protein from Aquifex aeolicus (strain VF5).